The primary structure comprises 115 residues: Ribonuclease P protein component (115 aa).

The protein belongs to the RnpA family. Consists of a catalytic RNA component (M1 or rnpB) and a protein subunit.

It catalyses the reaction Endonucleolytic cleavage of RNA, removing 5'-extranucleotides from tRNA precursor.. In terms of biological role, RNaseP catalyzes the removal of the 5'-leader sequence from pre-tRNA to produce the mature 5'-terminus. It can also cleave other RNA substrates such as 4.5S RNA. The protein component plays an auxiliary but essential role in vivo by binding to the 5'-leader sequence and broadening the substrate specificity of the ribozyme. This Symbiobacterium thermophilum (strain DSM 24528 / JCM 14929 / IAM 14863 / T) protein is Ribonuclease P protein component.